The following is an 82-amino-acid chain: Small ribosomal subunit protein uS17 (82 aa).

The protein belongs to the universal ribosomal protein uS17 family. Part of the 30S ribosomal subunit.

Functionally, one of the primary rRNA binding proteins, it binds specifically to the 5'-end of 16S ribosomal RNA. The polypeptide is Small ribosomal subunit protein uS17 (Rickettsia rickettsii (strain Iowa)).